A 156-amino-acid chain; its full sequence is MNPRDIVEQVTALAEPVAEQLGLQLVAVAYQTHTKPATLRVDIRHPTEGTGLDDCEKMSRALEALLDTRDDLIIGAYNLEVSSPGVERVLTTDREFMAFRGFPVMVKTFGPVDGKKQWEGRLLERDGENVYLTIAGRRVALPRPQVARVQLVQSLP.

This sequence belongs to the RimP family.

Its subcellular location is the cytoplasm. Its function is as follows. Required for maturation of 30S ribosomal subunits. The protein is Ribosome maturation factor RimP of Gloeobacter violaceus (strain ATCC 29082 / PCC 7421).